Reading from the N-terminus, the 284-residue chain is Fructosamine kinase FrlD (284 aa).

Belongs to the carbohydrate kinase PfkB family.

Catalyzes the phosphorylation of a range of fructosamines to fructosamine 6-phosphates. In Bacillus subtilis (strain 168), this protein is Fructosamine kinase FrlD (frlD).